We begin with the raw amino-acid sequence, 487 residues long: Cysteine--tRNA ligase (487 aa).

C29 lines the Zn(2+) pocket. Residues 31 to 41 carry the 'HIGH' region motif; sequence VTVYDFCHIGH. Zn(2+) contacts are provided by C209, H234, and E238. Residues 266–270 carry the 'KMSKS' region motif; sequence KMSKS. Residue K269 coordinates ATP.

It belongs to the class-I aminoacyl-tRNA synthetase family. In terms of assembly, monomer. Zn(2+) is required as a cofactor.

It localises to the cytoplasm. It catalyses the reaction tRNA(Cys) + L-cysteine + ATP = L-cysteinyl-tRNA(Cys) + AMP + diphosphate. In Trichlorobacter lovleyi (strain ATCC BAA-1151 / DSM 17278 / SZ) (Geobacter lovleyi), this protein is Cysteine--tRNA ligase.